The primary structure comprises 311 residues: GTPase Era (311 aa).

The Era-type G domain maps to 18 to 185 (RSGFVALIGA…AKYLAESVPN (168 aa)). Residues 26–33 (GAPNAGKS) form a G1 region. 26–33 (GAPNAGKS) serves as a coordination point for GTP. The tract at residues 52-56 (QTTRA) is G2. Residues 73 to 76 (DTPG) form a G3 region. Residues 73–77 (DTPGI) and 135–138 (NKVD) each bind GTP. The G4 stretch occupies residues 135-138 (NKVD). Residues 164–166 (ISA) form a G5 region. The region spanning 216 to 293 (LHEELPYAST…HQFLFVKVRE (78 aa)) is the KH type-2 domain.

Belongs to the TRAFAC class TrmE-Era-EngA-EngB-Septin-like GTPase superfamily. Era GTPase family. Monomer.

The protein resides in the cytoplasm. The protein localises to the cell inner membrane. Its function is as follows. An essential GTPase that binds both GDP and GTP, with rapid nucleotide exchange. Plays a role in 16S rRNA processing and 30S ribosomal subunit biogenesis and possibly also in cell cycle regulation and energy metabolism. In Brucella melitensis biotype 1 (strain ATCC 23456 / CCUG 17765 / NCTC 10094 / 16M), this protein is GTPase Era.